The primary structure comprises 276 residues: Diaminopimelate epimerase (276 aa).

Substrate contacts are provided by Asn11, Gln44, and Asn64. Cys73 acts as the Proton donor in catalysis. Residues 74–75, Asn157, Asn190, and 208–209 contribute to the substrate site; these read GN and ER. Cys217 serves as the catalytic Proton acceptor. 218 to 219 contributes to the substrate binding site; it reads GS.

This sequence belongs to the diaminopimelate epimerase family. Homodimer.

Its subcellular location is the cytoplasm. It carries out the reaction (2S,6S)-2,6-diaminopimelate = meso-2,6-diaminopimelate. Its pathway is amino-acid biosynthesis; L-lysine biosynthesis via DAP pathway; DL-2,6-diaminopimelate from LL-2,6-diaminopimelate: step 1/1. Functionally, catalyzes the stereoinversion of LL-2,6-diaminopimelate (L,L-DAP) to meso-diaminopimelate (meso-DAP), a precursor of L-lysine and an essential component of the bacterial peptidoglycan. This is Diaminopimelate epimerase from Blochmanniella floridana.